Reading from the N-terminus, the 270-residue chain is Molybdenum-pterin-binding protein MopB (270 aa).

Mop domains lie at 131-197 (RTSA…LLAG) and 203-269 (RLSV…ILAL).

It belongs to the ModE family.

The chain is Molybdenum-pterin-binding protein MopB (mopB) from Rhodobacter capsulatus (Rhodopseudomonas capsulata).